The following is a 290-amino-acid chain: Pyridoxal kinase PdxY (290 aa).

Substrate contacts are provided by residues Ser12 and 47-48; that span reads TQ. ATP contacts are provided by residues Asp114, Glu151, Lys184, and 211–214; that span reads RPLL. Residue Asp225 coordinates substrate.

Belongs to the pyridoxine kinase family. PdxY subfamily. Homodimer. Requires Mg(2+) as cofactor.

The enzyme catalyses pyridoxal + ATP = pyridoxal 5'-phosphate + ADP + H(+). It functions in the pathway cofactor metabolism; pyridoxal 5'-phosphate salvage; pyridoxal 5'-phosphate from pyridoxal: step 1/1. Pyridoxal kinase involved in the salvage pathway of pyridoxal 5'-phosphate (PLP). Catalyzes the phosphorylation of pyridoxal to PLP. The protein is Pyridoxal kinase PdxY of Pseudomonas fluorescens (strain ATCC BAA-477 / NRRL B-23932 / Pf-5).